Reading from the N-terminus, the 183-residue chain is TATA-box-binding protein 2 (183 aa).

Tandem repeats lie at residues 8–84 (IENV…AKKL) and 99–177 (VQNI…RQQL).

This sequence belongs to the TBP family.

General factor that plays a role in the activation of archaeal genes transcribed by RNA polymerase. Binds specifically to the TATA box promoter element which lies close to the position of transcription initiation. The polypeptide is TATA-box-binding protein 2 (Methanosarcina mazei (strain ATCC BAA-159 / DSM 3647 / Goe1 / Go1 / JCM 11833 / OCM 88) (Methanosarcina frisia)).